Consider the following 376-residue polypeptide: Chaperone protein DnaJ (376 aa).

The J domain occupies 5 to 70 (DYYEVLGVGR…DKKAAYDQFG (66 aa)). The CR-type zinc finger occupies 132–210 (GLTKELRIPT…CHGEGRVEKS (79 aa)). Residues Cys-145, Cys-148, Cys-162, Cys-165, Cys-184, Cys-187, Cys-198, and Cys-201 each coordinate Zn(2+). CXXCXGXG motif repeat units follow at residues 145–152 (CDLCDGSG), 162–169 (CGTCHGQG), 184–191 (CPTCHGRG), and 198–205 (CGKCHGEG).

The protein belongs to the DnaJ family. As to quaternary structure, homodimer. Zn(2+) is required as a cofactor.

It localises to the cytoplasm. In terms of biological role, participates actively in the response to hyperosmotic and heat shock by preventing the aggregation of stress-denatured proteins and by disaggregating proteins, also in an autonomous, DnaK-independent fashion. Unfolded proteins bind initially to DnaJ; upon interaction with the DnaJ-bound protein, DnaK hydrolyzes its bound ATP, resulting in the formation of a stable complex. GrpE releases ADP from DnaK; ATP binding to DnaK triggers the release of the substrate protein, thus completing the reaction cycle. Several rounds of ATP-dependent interactions between DnaJ, DnaK and GrpE are required for fully efficient folding. Also involved, together with DnaK and GrpE, in the DNA replication of plasmids through activation of initiation proteins. This chain is Chaperone protein DnaJ, found in Shewanella loihica (strain ATCC BAA-1088 / PV-4).